Reading from the N-terminus, the 424-residue chain is Acetyl-CoA acetyltransferase, mitochondrial (424 aa).

The N-terminal 30 residues, 1–30 (MAALAVLHGVVRRPLLRGLLQEVRCLGRSY), are a transit peptide targeting the mitochondrion. Position 63 is an N6-acetyllysine; alternate (Lys63). Lys63 is modified (N6-succinyllysine; alternate). An N6-succinyllysine modification is found at Lys75. The Acyl-thioester intermediate role is filled by Cys123. Residues Lys171, Lys178, Lys187, and Lys199 each carry the N6-acetyllysine; alternate modification. Residues Lys171, Lys178, Lys187, and Lys199 each carry the N6-succinyllysine; alternate modification. Ser204 carries the post-translational modification Phosphoserine. Tyr216 provides a ligand contact to CoA. Tyr216 contributes to the K(+) binding site. Lys220 and Lys227 each carry N6-acetyllysine; alternate. Residues Lys220 and Lys227 each carry the N6-succinyllysine; alternate modification. An N6-succinyllysine modification is found at Lys240. Lys242 carries the post-translational modification N6-acetyllysine; alternate. An N6-succinyllysine; alternate modification is found at Lys242. Residues Lys248 and Lys254 each carry the N6-acetyllysine modification. CoA contacts are provided by residues 255–257 (RVD) and Lys260. Lys260 is modified (N6-acetyllysine; alternate). Residue Lys260 is modified to N6-succinyllysine; alternate. N6-succinyllysine occurs at positions 263 and 265. Lys270 is subject to N6-acetyllysine. Ala277, Ala278, and Ala280 together coordinate K(+). Residue Ser281 coordinates CoA. Lys335 is modified (N6-acetyllysine). A K(+)-binding site is contributed by Val378. The active-site Proton donor/acceptor is Cys410.

This sequence belongs to the thiolase-like superfamily. Thiolase family. In terms of assembly, homotetramer. Post-translationally, succinylation at Lys-265, adjacent to a coenzyme A binding site. Desuccinylated by SIRT5.

The protein resides in the mitochondrion. The enzyme catalyses 2 acetyl-CoA = acetoacetyl-CoA + CoA. It catalyses the reaction propanoyl-CoA + acetyl-CoA = 2-methyl-3-oxobutanoyl-CoA + CoA. Its pathway is lipid metabolism; fatty acid beta-oxidation. Its activity is regulated as follows. Activated by potassium ions, but not sodium ions. Functionally, this is one of the enzymes that catalyzes the last step of the mitochondrial beta-oxidation pathway, an aerobic process breaking down fatty acids into acetyl-CoA. Using free coenzyme A/CoA, catalyzes the thiolytic cleavage of medium- to long-chain 3-oxoacyl-CoAs into acetyl-CoA and a fatty acyl-CoA shortened by two carbon atoms. The activity of the enzyme is reversible and it can also catalyze the condensation of two acetyl-CoA molecules into acetoacetyl-CoA. Thereby, it plays a major role in ketone body metabolism. This Rattus norvegicus (Rat) protein is Acetyl-CoA acetyltransferase, mitochondrial (Acat1).